The primary structure comprises 302 residues: Phosphatidylglycerol--prolipoprotein diacylglyceryl transferase (302 aa).

3 consecutive transmembrane segments (helical) span residues 26–46 (WYAL…VMLV), 67–87 (LVLW…VLFY), and 108–128 (IWEG…AIVL). Arg156 is an a 1,2-diacyl-sn-glycero-3-phospho-(1'-sn-glycerol) binding site. 2 consecutive transmembrane segments (helical) span residues 231–251 (GALV…LEGV) and 263–283 (LGLT…VWLL).

Belongs to the Lgt family.

Its subcellular location is the cell inner membrane. It carries out the reaction L-cysteinyl-[prolipoprotein] + a 1,2-diacyl-sn-glycero-3-phospho-(1'-sn-glycerol) = an S-1,2-diacyl-sn-glyceryl-L-cysteinyl-[prolipoprotein] + sn-glycerol 1-phosphate + H(+). The protein operates within protein modification; lipoprotein biosynthesis (diacylglyceryl transfer). In terms of biological role, catalyzes the transfer of the diacylglyceryl group from phosphatidylglycerol to the sulfhydryl group of the N-terminal cysteine of a prolipoprotein, the first step in the formation of mature lipoproteins. The chain is Phosphatidylglycerol--prolipoprotein diacylglyceryl transferase from Caulobacter sp. (strain K31).